The following is a 198-amino-acid chain: Recombination protein RecR (198 aa).

The C4-type zinc-finger motif lies at 57–72 (CSICGNLTESDPCAIC). A Toprim domain is found at 80–175 (TTILVVEESK…KVTRLARGLA (96 aa)).

This sequence belongs to the RecR family.

Functionally, may play a role in DNA repair. It seems to be involved in an RecBC-independent recombinational process of DNA repair. It may act with RecF and RecO. The sequence is that of Recombination protein RecR from Lactococcus lactis subsp. lactis (strain IL1403) (Streptococcus lactis).